The sequence spans 111 residues: Small ribosomal subunit protein bS18 (111 aa).

Residues 1-32 (MDLENTENVENNNNNEEEVKAKGERKAHFNKE) form a disordered region. Basic and acidic residues predominate over residues 17–32 (EEVKAKGERKAHFNKE).

The protein belongs to the bacterial ribosomal protein bS18 family. Part of the 30S ribosomal subunit. Forms a tight heterodimer with protein bS6.

Functionally, binds as a heterodimer with protein bS6 to the central domain of the 16S rRNA, where it helps stabilize the platform of the 30S subunit. The protein is Small ribosomal subunit protein bS18 of Brachyspira hyodysenteriae (strain ATCC 49526 / WA1).